Consider the following 219-residue polypeptide: MIFYIISLKIKLIRDYYKYNACIYNNNMEQIIQNVNTIINLYEQFGGSDYIGESQTQLEHMTRAAMLAEEFGEQNDIILAAFLHDIGHLIEINNDTIKMGSLGIMNHELIARDYLIEKGFDKDIANIIGNHVKAKRYLVTKYPEYKINLSEASRQTLLYQKNTMSQEEMTEFESDPLFNKSLKLRFYDDQSKLLSKSIKPLDYYRNLMIEYLSESTNNV.

In terms of domain architecture, HD spans 57 to 158 (QLEHMTRAAM…LSEASRQTLL (102 aa)).

This is an uncharacterized protein from Acanthamoeba polyphaga mimivirus (APMV).